Here is a 31-residue protein sequence, read N- to C-terminus: MSDINATRLPAWLVDCPCVGDDVNRLLTRGE.

A propeptide spanning residues 1–10 (MSDINATRLP) is cleaved from the precursor. Residues 11–17 (AWLVDCP) constitute a cross-link (cyclopeptide (Ala-Pro)). Residues 12–16 (WLVDC) constitute a cross-link (2'-cysteinyl-6'-hydroxytryptophan sulfoxide (Trp-Cys)). Residues 18–31 (CVGDDVNRLLTRGE) constitute a propeptide that is removed on maturation.

This sequence belongs to the MSDIN fungal toxin family. Post-translationally, processed by the macrocyclase-peptidase enzyme POPB to yield a toxic cyclic heptapeptide. POPB first removes 10 residues from the N-terminus. Conformational trapping of the remaining peptide forces the enzyme to release this intermediate rather than proceed to macrocyclization. The enzyme rebinds the remaining peptide in a different conformation and catalyzes macrocyclization of the N-terminal 7 residues.

Major toxin that belongs to the bicyclic heptapeptides called phallotoxins. Although structurally related to amatoxins, phallotoxins have a different mode of action, which is the stabilization of F-actin. Phallotoxins are poisonous when administered parenterally, but not orally because of poor absorption. This chain is Phallacidin proprotein 1 (PHA1_2), found in Amanita bisporigera (Destroying angel).